We begin with the raw amino-acid sequence, 882 residues long: Translation initiation factor IF-2 (882 aa).

The disordered stretch occupies residues 57–211 (YIPANKTKDK…KDKSKPKVAT (155 aa)). Basic and acidic residues predominate over residues 104 to 115 (TTSEKQKDKGEQ). Residues 199–211 (RHKKDKSKPKVAT) show a composition bias toward basic residues. A tr-type G domain is found at 381–550 (ERPPVVTIMG…LIQAEVLELK (170 aa)). The G1 stretch occupies residues 390–397 (GHVDHGKT). Residue 390–397 (GHVDHGKT) coordinates GTP. The interval 415 to 419 (GITQH) is G2. Residues 436–439 (DTPG) form a G3 region. Residues 436-440 (DTPGH) and 490-493 (NKMD) contribute to the GTP site. The segment at 490–493 (NKMD) is G4. Positions 526–528 (SAK) are G5.

It belongs to the TRAFAC class translation factor GTPase superfamily. Classic translation factor GTPase family. IF-2 subfamily.

Its subcellular location is the cytoplasm. One of the essential components for the initiation of protein synthesis. Protects formylmethionyl-tRNA from spontaneous hydrolysis and promotes its binding to the 30S ribosomal subunits. Also involved in the hydrolysis of GTP during the formation of the 70S ribosomal complex. The protein is Translation initiation factor IF-2 of Helicobacter hepaticus (strain ATCC 51449 / 3B1).